The following is a 218-amino-acid chain: Thiopurine S-methyltransferase (218 aa).

Residues Trp10, Leu45, Glu66, and Arg123 each contribute to the S-adenosyl-L-methionine site.

The protein belongs to the class I-like SAM-binding methyltransferase superfamily. TPMT family.

The protein resides in the cytoplasm. The catalysed reaction is S-adenosyl-L-methionine + a thiopurine = S-adenosyl-L-homocysteine + a thiopurine S-methylether.. Its function is as follows. Involved in the biological cycling of tellurium and selenium. Tellurium resistance (Ter) mechanism. The protein is Thiopurine S-methyltransferase of Pseudomonas syringae pv. pisi.